A 92-amino-acid chain; its full sequence is YcgL domain-containing protein SO_2575 (92 aa).

Positions 1-85 (MLCAVYKSSR…PQVNLLAEHR (85 aa)) constitute a YcgL domain.

The chain is YcgL domain-containing protein SO_2575 from Shewanella oneidensis (strain ATCC 700550 / JCM 31522 / CIP 106686 / LMG 19005 / NCIMB 14063 / MR-1).